The primary structure comprises 386 residues: Palmitoyltransferase ZDHHC9 (386 aa).

Residues 1 to 35 lie on the Cytoplasmic side of the membrane; the sequence is MSAVMITRKITRKWEKLPGKNTFCCDGRVMMARQK. A helical membrane pass occupies residues 36–56; the sequence is GVFYLTLFLIVGTCSLFFAFE. The Lumenal segment spans residues 57 to 63; that stretch reads CPYLAVH. A helical membrane pass occupies residues 64-84; it reads LSPAIPVFAVLLFVFVMAMLL. The Cytoplasmic segment spans residues 85–183; that stretch reads RTSFSDPGVL…NCVGKRNYRY (99 aa). A DHHC domain is found at 139 to 189; sequence KYCYTCKIFRPPRASHCSICDNCVDRFDHHCPWVGNCVGKRNYRYFYLFTL. Cys-169 serves as the catalytic S-palmitoyl cysteine intermediate. The helical transmembrane segment at 184–204 threads the bilayer; that stretch reads FYLFTLSLSLLTIYIFAFDIV. The Lumenal segment spans residues 205–224; the sequence is HVVLRSVDSGFVNTLKETPG. Residues 225–245 form a helical membrane-spanning segment; it reads TVLEVLVCFFTLWSVVGLTGF. Topologically, residues 246–386 are cytoplasmic; the sequence is HTYLISLNQT…APAVIKESTH (141 aa). Residues 306–334 are compositionally biased toward polar residues; it reads SCSSAPSNGATTVPVNKSSNPATQTTKSS. The interval 306-386 is disordered; that stretch reads SCSSAPSNGA…APAVIKESTH (81 aa).

The protein belongs to the DHHC palmitoyltransferase family. ERF2/ZDHHC9 subfamily.

It localises to the endoplasmic reticulum membrane. It is found in the golgi apparatus membrane. It catalyses the reaction L-cysteinyl-[protein] + hexadecanoyl-CoA = S-hexadecanoyl-L-cysteinyl-[protein] + CoA. Its function is as follows. Palmitoyltransferase that catalyzes the addition of palmitate onto various protein substrates, such as ADRB2, GSDMD, HRAS, NRAS and CGAS. The chain is Palmitoyltransferase ZDHHC9 from Danio rerio (Zebrafish).